The following is a 72-amino-acid chain: Translation initiation factor IF-1 (72 aa).

One can recognise an S1-like domain in the interval 1 to 72; that stretch reads MAKEESIEIE…TKGRITYRYK (72 aa).

Belongs to the IF-1 family. In terms of assembly, component of the 30S ribosomal translation pre-initiation complex which assembles on the 30S ribosome in the order IF-2 and IF-3, IF-1 and N-formylmethionyl-tRNA(fMet); mRNA recruitment can occur at any time during PIC assembly.

The protein localises to the cytoplasm. In terms of biological role, one of the essential components for the initiation of protein synthesis. Stabilizes the binding of IF-2 and IF-3 on the 30S subunit to which N-formylmethionyl-tRNA(fMet) subsequently binds. Helps modulate mRNA selection, yielding the 30S pre-initiation complex (PIC). Upon addition of the 50S ribosomal subunit IF-1, IF-2 and IF-3 are released leaving the mature 70S translation initiation complex. The protein is Translation initiation factor IF-1 of Chlorobium chlorochromatii (strain CaD3).